The following is a 384-amino-acid chain: Glucose-fructose oxidoreductase domain-containing protein 2 (384 aa).

The first 25 residues, 1-25 (MMTLPGIGVFGTGNTARVLIQLLRA), serve as a signal peptide directing secretion. The disordered stretch occupies residues 358–384 (GEWESVELTNEETDSNQNLSEVIQHNL). The span at 372 to 384 (SNQNLSEVIQHNL) shows a compositional bias: polar residues.

The protein belongs to the Gfo/Idh/MocA family.

The protein resides in the secreted. It is found in the extracellular space. The protein localises to the extracellular matrix. Functionally, promotes matrix assembly. The sequence is that of Glucose-fructose oxidoreductase domain-containing protein 2 (gfod2) from Xenopus laevis (African clawed frog).